Here is a 136-residue protein sequence, read N- to C-terminus: Protein NrdI (136 aa).

Belongs to the NrdI family.

Probably involved in ribonucleotide reductase function. The polypeptide is Protein NrdI (Salmonella paratyphi B (strain ATCC BAA-1250 / SPB7)).